The chain runs to 81 residues: U-poneritoxin(01)-Om2a (81 aa).

Positions 1 to 25 are cleaved as a signal peptide; sequence MKPSGITFAFLVVFMMAIMYNSVQA. Residues 26–47 constitute a propeptide that is removed on maturation; it reads AAIADADADAEAKAFADAFAEA.

It belongs to the formicidae venom precursor-01 superfamily. Post-translationally, truncated sequences of this peptide have also been found in the venom. It is possible they have been cleaved in the venom. Expressed by the venom gland.

It is found in the secreted. Its function is as follows. Cationic amphipathic alpha-helical peptide with antimicrobial activities against E.coli (MIC=6.2 uM), S.aureus (MIC=6.2 uM), and S.cerevisiae (MIC=50 uM). Also shows histamine-releasing activity (30.1% at 10 uM) and a weak hemolytic activity (10.4% at 50 uM). The polypeptide is U-poneritoxin(01)-Om2a (Odontomachus monticola (Trap-jaw ant)).